The following is a 431-amino-acid chain: Leucine carboxyl methyltransferase 1 (431 aa).

Residues Arg103, Gly131, Asp159, and 219-220 contribute to the S-adenosyl-L-methionine site; that span reads DL. The disordered stretch occupies residues 228 to 268; that stretch reads QPQQPLPPGVPIGSRGLHASPFTPGSTTQHEEQTEETSLPQ. Glu289 is an S-adenosyl-L-methionine binding site.

The protein belongs to the methyltransferase superfamily. LCMT family.

It carries out the reaction [phosphatase 2A protein]-C-terminal L-leucine + S-adenosyl-L-methionine = [phosphatase 2A protein]-C-terminal L-leucine methyl ester + S-adenosyl-L-homocysteine. Its function is as follows. Methylates the carboxyl group of the C-terminal leucine residue of protein phosphatase 2A catalytic subunits to form alpha-leucine ester residues. The protein is Leucine carboxyl methyltransferase 1 (ppm-1) of Neurospora crassa (strain ATCC 24698 / 74-OR23-1A / CBS 708.71 / DSM 1257 / FGSC 987).